Here is a 227-residue protein sequence, read N- to C-terminus: Ribose-5-phosphate isomerase A (227 aa).

Residues Thr26–Thr29, Asp82–Asp85, and Lys95–Gly98 each bind substrate. Glu104 (proton acceptor) is an active-site residue. Substrate is bound at residue Lys122.

It belongs to the ribose 5-phosphate isomerase family. As to quaternary structure, homodimer.

The catalysed reaction is aldehydo-D-ribose 5-phosphate = D-ribulose 5-phosphate. It functions in the pathway carbohydrate degradation; pentose phosphate pathway; D-ribose 5-phosphate from D-ribulose 5-phosphate (non-oxidative stage): step 1/1. In terms of biological role, catalyzes the reversible conversion of ribose-5-phosphate to ribulose 5-phosphate. The chain is Ribose-5-phosphate isomerase A from Streptococcus pneumoniae serotype 2 (strain D39 / NCTC 7466).